A 366-amino-acid chain; its full sequence is Galactoside alpha-(1,2)-fucosyltransferase 1 (366 aa).

Topologically, residues Met1–Gln8 are cytoplasmic. A helical; Signal-anchor for type II membrane protein membrane pass occupies residues Leu9–Phe25. The Lumenal portion of the chain corresponds to Leu26–Pro366. N-linked (GlcNAc...) asparagine glycosylation is found at Asn66, Asn302, and Asn328.

This sequence belongs to the glycosyltransferase 11 family.

It is found in the golgi apparatus. The protein localises to the golgi stack membrane. It carries out the reaction a beta-D-galactosyl-(1-&gt;4)-N-acetyl-beta-D-glucosaminyl derivative + GDP-beta-L-fucose = an alpha-L-Fuc-(1-&gt;2)-beta-D-Gal-(1-&gt;4)-beta-D-GlcNAc derivative + GDP + H(+). The catalysed reaction is a ganglioside GA1 + GDP-beta-L-fucose = a ganglioside Fuc-GA1 + GDP + H(+). The enzyme catalyses a beta-D-Gal-(1-&gt;3)-beta-D-GlcNAc-(1-&gt;3)-beta-D-Gal-(1-&gt;4)-beta-D-Glc-(1&lt;-&gt;1')-Cer(d18:1(4E)) + GDP-beta-L-fucose = alpha-L-fucosyl-(1-&gt;2)- beta-D-galactosyl-(1-&gt;3)-N-acetyl-beta-D-glucosaminyl-(1-&gt;3)-beta-D-galactosyl-(1-&gt;4)-beta-D-glucosyl-(1&lt;-&gt;1')-N-acylsphing-4-enine + GDP + H(+). It catalyses the reaction a neolactoside nLc4Cer(d18:1(4E)) + GDP-beta-L-fucose = a neolactoside IV(2)-alpha-Fuc-nLc4Cer(d18:1(4E)) + GDP + H(+). It carries out the reaction a ganglioside GM1 + GDP-beta-L-fucose = a ganglioside Fuc-GM1 + GDP + H(+). The catalysed reaction is beta-D-galactosyl-(1-&gt;3)-N-acetyl-D-galactosamine + GDP-beta-L-fucose = alpha-L-fucosyl-(1-&gt;2)-beta-D-galactosyl-(1-&gt;3)-N-acetyl-D-galactosamine + GDP + H(+). It participates in protein modification; protein glycosylation. Functionally, catalyzes the transfer of L-fucose, from a guanosine diphosphate-beta-L-fucose, to the terminal galactose residue of glycoconjugates through an alpha(1,2) linkage leading to H antigen synthesis that is an intermediate substrate in the synthesis of ABO blood group antigens. H antigen is essential for maturation of the glomerular layer of the main olfactory bulb, in cell migration and early cell-cell contacts during tumor associated angiogenesis. Preferentially fucosylates soluble lactose and to a lesser extent fucosylates glycolipids gangliosides GA1 and GM1a. In Gorilla gorilla gorilla (Western lowland gorilla), this protein is Galactoside alpha-(1,2)-fucosyltransferase 1.